A 125-amino-acid polypeptide reads, in one-letter code: Glycine cleavage system H protein 1 (125 aa).

The Lipoyl-binding domain occupies 22 to 103; sequence KAYIGITDYA…PYGSWLVAVR (82 aa). Lysine 63 carries the post-translational modification N6-lipoyllysine.

It belongs to the GcvH family. As to quaternary structure, the glycine cleavage system is composed of four proteins: P, T, L and H. The cofactor is (R)-lipoate.

Functionally, the glycine cleavage system catalyzes the degradation of glycine. The H protein shuttles the methylamine group of glycine from the P protein to the T protein. This chain is Glycine cleavage system H protein 1, found in Caldanaerobacter subterraneus subsp. tengcongensis (strain DSM 15242 / JCM 11007 / NBRC 100824 / MB4) (Thermoanaerobacter tengcongensis).